Reading from the N-terminus, the 817-residue chain is MGDILAHESELLGLVKEYLDFAEFEDTLKTFSKECKVKGKPLCKNVGGPLKKDSKSLVIQRDLVAAFDSGDQKAFFDLWEGHIPSSVRDTDSLAQKLEFYLHIHFAIYLLKYCRGRPDKQELDKRISYFKTYLETKGAALSQTTEFLPFYALPFVPNPMVHPSFKELFQDSWTPELKLKLEKFLALTFKANNTPKLLTIYKENGPNSKELLQQLHQQLVEAERRAMTYLKRYNKIQADYHNLIGVTAELVDSLEATVSGKMITPEYLQSVCVRLFSNQMRQSLAHSVDFTRPGTASTMLRASLAPEKLKDVPLLPSLDYEKLKKDLIWGSDRLKAFLLQALRWRLTTSHPGEQRETVLQAYISNDLLDCHSHNQRSVLQLLHSKSEAVRQYMARLINALASLAEGRLYLAQNTKVLRMLEGRLKEEDKDVITRENVLGALQKFSLRRPLQTAMIRDGLIFWLIDLLKDPDCLSDYTLEYSVALLMNLCLRSAGKNMCAKVAGLMLKVLSDLLGHENHEIQPYVNGALYSILSIPSIREEARAMGMEDILRCFIKEGNAEMIRQIEFIIKQLNSEDLLDGVLESDDDEDEDDEEDHDIMEADLDKDELIQPQLGELSGEKLLTTEYLGIMTNTGKARRKGPASVQWSGDEPLRRPVTPGGHRTGCPVLGDHLISPQNAQQARNGCLRAMPVAHPDDYKEGKPGVTGCGTSSSFMDHKPREWSPAGHQKSRLVPTAALGWPREMTQDPSSGHITREFVPAFTCKPQVPSTPETVEQNPLKAKALSLAPQFSSSGPQQASRPASTASSTRGLHSSQSIRK.

Positions 7-39 (HESELLGLVKEYLDFAEFEDTLKTFSKECKVKG) constitute a LisH domain. A coiled-coil region spans residues 204–230 (GPNSKELLQQLHQQLVEAERRAMTYLK). Serine 583 is modified (phosphoserine). Disordered stretches follow at residues 637–659 (RKGPASVQWSGDEPLRRPVTPGG) and 761–817 (CKPQ…SIRK). Residues 765-774 (VPSTPETVEQ) are compositionally biased toward polar residues. The span at 793-807 (PQQASRPASTASSTR) shows a compositional bias: low complexity. The span at 808-817 (GLHSSQSIRK) shows a compositional bias: polar residues.

Interacts with TOGARAM1, CCDC66, CEP104, CSPP1 and CEP290. Interacts with NDUFAF2.

It is found in the cytoplasm. The protein resides in the cytoskeleton. The protein localises to the cilium basal body. It localises to the cell projection. Its subcellular location is the cilium. It is found in the microtubule organizing center. The protein resides in the centrosome. The protein localises to the centriole. Its function is as follows. Involved in ciliogenesis. It is required for appropriate acetylation and polyglutamylation of ciliary microtubules, and regulation of cilium length. Acts as a positive regulator of hedgehog (Hh) signaling. May participate in the trafficking and/or retention of GLI2 and GLI3 proteins at the ciliary tip. The chain is LisH domain-containing protein ARMC9 from Mus musculus (Mouse).